Consider the following 455-residue polypeptide: CDP-diacylglycerol--serine O-phosphatidyltransferase (455 aa).

PLD phosphodiesterase domains follow at residues 134–160 (VFGV…NNVY) and 356–383 (GDNT…NPRA).

This sequence belongs to the CDP-alcohol phosphatidyltransferase class-II family. In terms of assembly, multimeric.

It localises to the cytoplasm. Its subcellular location is the cell inner membrane. It carries out the reaction a CDP-1,2-diacyl-sn-glycerol + L-serine = a 1,2-diacyl-sn-glycero-3-phospho-L-serine + CMP + H(+). The sequence is that of CDP-diacylglycerol--serine O-phosphatidyltransferase (pssA) from Haemophilus influenzae (strain ATCC 51907 / DSM 11121 / KW20 / Rd).